The sequence spans 151 residues: Ribosome maturation factor RimP (151 aa).

Belongs to the RimP family.

It is found in the cytoplasm. Functionally, required for maturation of 30S ribosomal subunits. The protein is Ribosome maturation factor RimP of Shewanella sp. (strain ANA-3).